Here is a 359-residue protein sequence, read N- to C-terminus: Protein mab-21-like 2-A (359 aa).

Belongs to the mab-21 family.

Its subcellular location is the nucleus. The protein localises to the cytoplasm. Functionally, required for normal development of the eye. May promote dorsalization of the developing embryo by antagonizing the ventralizing factor bmp4. Functional antagonism of bmp4 may require interaction with smad1. Required for gastrulation and subsequent neural development. May function as a transcriptional repressor. This Xenopus laevis (African clawed frog) protein is Protein mab-21-like 2-A (mab21l2-a).